The chain runs to 325 residues: Inactive S-adenosylmethionine decarboxylase prozyme (325 aa).

This sequence belongs to the eukaryotic AdoMetDC family. Forms a heterodimer with S-adenosylmethionine decarboxylase AdoMetDC; heterodimerization is required to activate AdoMetDC.

Its pathway is amine and polyamine biosynthesis; S-adenosylmethioninamine biosynthesis; S-adenosylmethioninamine from S-adenosyl-L-methionine: step 1/1. In terms of biological role, probably has no catalytic activity due to the loss of several residues required for processing and catalysis. Forms a complex with S-adenosylmethionine decarboxylase AdoMetDC which is essential to activate AdoMetDC. Required for the biosynthesis of the polyamine spermidine. Required for growth and survival during the bloodstream life cycle stage. In Trypanosoma brucei brucei, this protein is Inactive S-adenosylmethionine decarboxylase prozyme.